Here is a 164-residue protein sequence, read N- to C-terminus: ATP synthase subunit b 1 (164 aa).

Residues 8 to 28 traverse the membrane as a helical segment; that stretch reads PETWVAVAFVILMGVFAYFGV.

It belongs to the ATPase B chain family. F-type ATPases have 2 components, F(1) - the catalytic core - and F(0) - the membrane proton channel. F(1) has five subunits: alpha(3), beta(3), gamma(1), delta(1), epsilon(1). F(0) has three main subunits: a(1), b(2) and c(10-14). The alpha and beta chains form an alternating ring which encloses part of the gamma chain. F(1) is attached to F(0) by a central stalk formed by the gamma and epsilon chains, while a peripheral stalk is formed by the delta and b chains.

It localises to the cell inner membrane. Functionally, f(1)F(0) ATP synthase produces ATP from ADP in the presence of a proton or sodium gradient. F-type ATPases consist of two structural domains, F(1) containing the extramembraneous catalytic core and F(0) containing the membrane proton channel, linked together by a central stalk and a peripheral stalk. During catalysis, ATP synthesis in the catalytic domain of F(1) is coupled via a rotary mechanism of the central stalk subunits to proton translocation. Component of the F(0) channel, it forms part of the peripheral stalk, linking F(1) to F(0). This is ATP synthase subunit b 1 from Rhodopseudomonas palustris (strain BisB18).